A 278-amino-acid polypeptide reads, in one-letter code: Putative ABC transporter ATP-binding protein MTBMA_c05830 (278 aa).

The ABC transporter domain maps to 4–239; it reads IEAVNIRYTY…IDTIRGADLR (236 aa). 37 to 44 contributes to the ATP binding site; the sequence is GPNGAGKS.

The protein belongs to the ABC transporter superfamily.

The protein localises to the cell membrane. Its function is as follows. Probably part of an ABC transporter complex. Responsible for energy coupling to the transport system. The protein is Putative ABC transporter ATP-binding protein MTBMA_c05830 of Methanothermobacter marburgensis (strain ATCC BAA-927 / DSM 2133 / JCM 14651 / NBRC 100331 / OCM 82 / Marburg) (Methanobacterium thermoautotrophicum).